A 263-amino-acid chain; its full sequence is Probable ABC transporter permease protein ycf63 (263 aa).

The next 6 helical transmembrane spans lie at 43 to 63 (LVGP…SMVF), 82 to 102 (AVIV…VIIA), 136 to 156 (LVFP…TISL), 159 to 179 (SIAI…SIFL), 199 to 219 (LCFG…SSGG), and 230 to 250 (SVVT…YFMF).

This sequence belongs to the MlaE permease family.

It localises to the plastid. Its subcellular location is the chloroplast membrane. Its function is as follows. Could be part of an ABC transporter complex. The chain is Probable ABC transporter permease protein ycf63 (ycf63) from Porphyra purpurea (Red seaweed).